Consider the following 51-residue polypeptide: Insulin (51 aa).

3 disulfides stabilise this stretch: C7/C37, C19/C50, and C36/C41.

It belongs to the insulin family. As to quaternary structure, heterodimer of a B chain and an A chain linked by two disulfide bonds.

The protein resides in the secreted. Functionally, insulin decreases blood glucose concentration. It increases cell permeability to monosaccharides, amino acids and fatty acids. It accelerates glycolysis, the pentose phosphate cycle, and glycogen synthesis in liver. The sequence is that of Insulin (INS) from Capra hircus (Goat).